The following is a 121-amino-acid chain: Small ribosomal subunit protein uS13 (121 aa).

A disordered region spans residues 94 to 121 (GLPLRGQRTRTNARTRKGPRRAAQSLKK).

Belongs to the universal ribosomal protein uS13 family. In terms of assembly, part of the 30S ribosomal subunit. Forms a loose heterodimer with protein S19. Forms two bridges to the 50S subunit in the 70S ribosome.

Functionally, located at the top of the head of the 30S subunit, it contacts several helices of the 16S rRNA. In the 70S ribosome it contacts the 23S rRNA (bridge B1a) and protein L5 of the 50S subunit (bridge B1b), connecting the 2 subunits; these bridges are implicated in subunit movement. Contacts the tRNAs in the A and P-sites. The sequence is that of Small ribosomal subunit protein uS13 from Paraburkholderia phytofirmans (strain DSM 17436 / LMG 22146 / PsJN) (Burkholderia phytofirmans).